Reading from the N-terminus, the 64-residue chain is Large ribosomal subunit protein bL35 (64 aa).

The segment covering 1-14 has biased composition (basic residues); the sequence is MKQKTHKGAAKRIK. Positions 1–50 are disordered; sequence MKQKTHKGAAKRIKISGSGKLRREQANRRHLLEGKPSKRTRRLKGTEDVA. Residues 21-36 are compositionally biased toward basic and acidic residues; it reads LRREQANRRHLLEGKP.

Belongs to the bacterial ribosomal protein bL35 family.

This Corynebacterium jeikeium (strain K411) protein is Large ribosomal subunit protein bL35.